Consider the following 217-residue polypeptide: Imidazole glycerol phosphate synthase subunit HisH (217 aa).

The Glutamine amidotransferase type-1 domain maps to 3 to 217; it reads TIAIVDYGVG…LYRNFVHWNP (215 aa). Cys82 acts as the Nucleophile in catalysis. Residues His197 and Glu199 contribute to the active site.

Heterodimer of HisH and HisF.

It is found in the cytoplasm. The catalysed reaction is 5-[(5-phospho-1-deoxy-D-ribulos-1-ylimino)methylamino]-1-(5-phospho-beta-D-ribosyl)imidazole-4-carboxamide + L-glutamine = D-erythro-1-(imidazol-4-yl)glycerol 3-phosphate + 5-amino-1-(5-phospho-beta-D-ribosyl)imidazole-4-carboxamide + L-glutamate + H(+). It catalyses the reaction L-glutamine + H2O = L-glutamate + NH4(+). The protein operates within amino-acid biosynthesis; L-histidine biosynthesis; L-histidine from 5-phospho-alpha-D-ribose 1-diphosphate: step 5/9. IGPS catalyzes the conversion of PRFAR and glutamine to IGP, AICAR and glutamate. The HisH subunit catalyzes the hydrolysis of glutamine to glutamate and ammonia as part of the synthesis of IGP and AICAR. The resulting ammonia molecule is channeled to the active site of HisF. The protein is Imidazole glycerol phosphate synthase subunit HisH of Cupriavidus pinatubonensis (strain JMP 134 / LMG 1197) (Cupriavidus necator (strain JMP 134)).